Reading from the N-terminus, the 248-residue chain is NADP-dependent 3-hydroxy acid dehydrogenase YdfG (248 aa).

NADP(+) contacts are provided by residues 7–12, 32–33, 54–55, and Asn81; these read GATAGF, RR, and DV. Ser134 serves as a coordination point for substrate. NADP(+) is bound by residues Tyr147, Lys151, and 177-185; that span reads PGLVGGTEF. Tyr147 (proton acceptor) is an active-site residue.

The protein belongs to the short-chain dehydrogenases/reductases (SDR) family. Homotetramer.

It carries out the reaction 3-hydroxypropanoate + NADP(+) = 3-oxopropanoate + NADPH + H(+). The enzyme catalyses L-allo-threonine + NADP(+) = aminoacetone + CO2 + NADPH. Functionally, NADP-dependent dehydrogenase with broad substrate specificity acting on 3-hydroxy acids. Catalyzes the NADP-dependent oxidation of L-allo-threonine to L-2-amino-3-keto-butyrate, which is spontaneously decarboxylated into aminoacetone. Also acts on D-threonine, L-serine, D-serine, D-3-hydroxyisobutyrate, L-3-hydroxyisobutyrate, D-glycerate and L-glycerate. Able to catalyze the reduction of the malonic semialdehyde to 3-hydroxypropionic acid. YdfG is apparently supplementing RutE, the presumed malonic semialdehyde reductase involved in pyrimidine degradation since both are able to detoxify malonic semialdehyde. This is NADP-dependent 3-hydroxy acid dehydrogenase YdfG from Escherichia coli (strain K12).